The following is a 517-amino-acid chain: MAIRLNPKVRRFLLDKCRQKRYGFLFLGCIFAILYCMGTWPFFAKDIVHDPNNLPYSLQDYSTDKDEPFFRGCTDTKLYLQNPAYSKMNASFVMLTRNEEIEDVLKTMRSIEGHFNKWFKYPYVFLNDDPFTDHFKDQIQAATNATVEFGTVDEIMWEFPAKVRNSLQFKASLEDQNDRGIMYGNMESYHKMCRFYSGIFYKHPLVSKYEWYWRIEPDVDFFCDISYDPFFEMAKHNKKYGFTVLITELYWTVPNLFRTTKSFIKKTAGLKENLGTLWKLFTFNYNILDTDDEEISRWVNFPWDAKPKLTEKLMVDFLLENHGQVNNEEDLEGIQYLVERARSKVPMLEDSLEGEDYNLCHFWSNFEIARVDLFDNEIYNAYFKFLEESGGFWTERWGDAPIHSIGLGMTLDLEDVHYFRDIGYRHSSLQHCPKNALQSQENLNTFDEGYNFGCGCRCVCPKKGEDIEDHSTPCMDIFFELLHGREYEKEFPGCYKPSIKDKDVIEEIRRENFRVIE.

Residues 1–23 are Cytoplasmic-facing; the sequence is MAIRLNPKVRRFLLDKCRQKRYG. A helical; Signal-anchor for type II membrane protein transmembrane segment spans residues 24 to 44; sequence FLFLGCIFAILYCMGTWPFFA. The segment at 45-85 is stem region; sequence KDIVHDPNNLPYSLQDYSTDKDEPFFRGCTDTKLYLQNPAY. The Lumenal segment spans residues 45–517; it reads KDIVHDPNNL…IRRENFRVIE (473 aa). The catalytic stretch occupies residues 86–517; sequence SKMNASFVML…IRRENFRVIE (432 aa). 2 N-linked (GlcNAc...) asparagine glycosylation sites follow: Asn-89 and Asn-144. Glu-367 acts as the Nucleophile in catalysis.

Belongs to the glycosyltransferase 15 family.

Its subcellular location is the membrane. Functionally, possible glycosyltransferase that transfers an alpha-D-mannosyl residue from GDP-mannose into lipid-linked oligosaccharide, forming an alpha-(1-&gt;2)-D-mannosyl-D-mannose linkage. This chain is Probable mannosyltransferase KTR7 (KTR7), found in Saccharomyces cerevisiae (strain ATCC 204508 / S288c) (Baker's yeast).